The chain runs to 138 residues: Large ribosomal subunit protein uL16 (138 aa).

The disordered stretch occupies residues 1–22; that stretch reads MQQPARTKYRKQQKGRNKGIAT. A compositionally biased stretch (basic residues) spans 7–17; it reads TKYRKQQKGRN.

Belongs to the universal ribosomal protein uL16 family. In terms of assembly, part of the 50S ribosomal subunit.

Functionally, binds 23S rRNA and is also seen to make contacts with the A and possibly P site tRNAs. In Nitrosospira multiformis (strain ATCC 25196 / NCIMB 11849 / C 71), this protein is Large ribosomal subunit protein uL16.